The sequence spans 929 residues: Isoleucine--tRNA ligase (929 aa).

The 'HIGH' region motif lies at 58–68 (PYANGDIHIGH). Glu-563 provides a ligand contact to L-isoleucyl-5'-AMP. The 'KMSKS' region signature appears at 605–609 (KMSKS). An ATP-binding site is contributed by Lys-608. Zn(2+)-binding residues include Cys-892, Cys-895, Cys-912, and Cys-915.

This sequence belongs to the class-I aminoacyl-tRNA synthetase family. IleS type 1 subfamily. Monomer. It depends on Zn(2+) as a cofactor.

The protein localises to the cytoplasm. It catalyses the reaction tRNA(Ile) + L-isoleucine + ATP = L-isoleucyl-tRNA(Ile) + AMP + diphosphate. Its function is as follows. Catalyzes the attachment of isoleucine to tRNA(Ile). As IleRS can inadvertently accommodate and process structurally similar amino acids such as valine, to avoid such errors it has two additional distinct tRNA(Ile)-dependent editing activities. One activity is designated as 'pretransfer' editing and involves the hydrolysis of activated Val-AMP. The other activity is designated 'posttransfer' editing and involves deacylation of mischarged Val-tRNA(Ile). The chain is Isoleucine--tRNA ligase from Neisseria gonorrhoeae (strain NCCP11945).